A 448-amino-acid polypeptide reads, in one-letter code: tRNA(Ile)-lysidine synthase (448 aa).

25–30 contacts ATP; it reads SGGSDS.

It belongs to the tRNA(Ile)-lysidine synthase family.

The protein localises to the cytoplasm. It catalyses the reaction cytidine(34) in tRNA(Ile2) + L-lysine + ATP = lysidine(34) in tRNA(Ile2) + AMP + diphosphate + H(+). Its function is as follows. Ligates lysine onto the cytidine present at position 34 of the AUA codon-specific tRNA(Ile) that contains the anticodon CAU, in an ATP-dependent manner. Cytidine is converted to lysidine, thus changing the amino acid specificity of the tRNA from methionine to isoleucine. This is tRNA(Ile)-lysidine synthase from Brucella abortus (strain S19).